Reading from the N-terminus, the 27-residue chain is Caerulein precursor fragment R1 (27 aa).

As to expression, expressed by the skin glands.

The protein localises to the secreted. Antimicrobial peptide. The polypeptide is Caerulein precursor fragment R1 (Xenopus ruwenzoriensis (Uganda clawed frog)).